A 138-amino-acid chain; its full sequence is Small ribosomal subunit protein bS16 (138 aa).

The tract at residues 92–138 is disordered; sequence QAAKREADAKQAAKEAAEAKAAAEAEAKAAAEAESADAGAEEAPAEA. The segment covering 94–122 has biased composition (basic and acidic residues); sequence AKREADAKQAAKEAAEAKAAAEAEAKAAA.

Belongs to the bacterial ribosomal protein bS16 family.

The chain is Small ribosomal subunit protein bS16 from Synechococcus sp. (strain WH7803).